Consider the following 702-residue polypeptide: Heparin-sulfate lyase (702 aa).

An N-terminal signal peptide occupies residues 1 to 17 (MKNIFFICFCALFAFSG). The Proton acceptor role is filled by Y314.

Belongs to the polysaccharide lyase 12 family.

Its subcellular location is the periplasm. It carries out the reaction Elimination of sulfate, appears to act on linkages between N-acetyl-D-glucosamine and uronate. Product is an unsaturated sugar.. In terms of biological role, specifically cleaves heparan sulfate-rich regions of acidic polysaccharides. Does not act on N,O-desulfated glucosamine or N-acetyl-O-sulfated glucosamine linkages. Functions in cleaving metazoan heparan sulfate and providing carbon, nitrogen and sulfate sources for microorganisms. This chain is Heparin-sulfate lyase (hepC), found in Bacteroides thetaiotaomicron (strain ATCC 29148 / DSM 2079 / JCM 5827 / CCUG 10774 / NCTC 10582 / VPI-5482 / E50).